An 854-amino-acid chain; its full sequence is Envelope glycoprotein B (854 aa).

Positions 1–22 (MAHTGSTVCAFLIFAVLKNVFC) are cleaved as a signal peptide. Residues 23–732 (QTPTSSSEVE…SGIINFIKNP (710 aa)) are Virion surface-facing. N-linked (GlcNAc...) asparagine; by host glycosylation occurs at Asn-51. Disulfide bonds link Cys-69–Cys-527, Cys-86–Cys-483, Cys-158–Cys-223, Cys-315–Cys-362, and Cys-552–Cys-589. An involved in fusion and/or binding to host membrane region spans residues 125 to 131 (IYNGIYA). Asn-180 carries an N-linked (GlcNAc...) asparagine; by host glycan. An involved in fusion and/or binding to host membrane region spans residues 209–217 (GWLLGGYRR). N-linked (GlcNAc...) asparagine; by host glycosylation is found at Asn-258 and Asn-311. 6 N-linked (GlcNAc...) asparagine; by host glycosylation sites follow: Asn-364, Asn-379, Asn-385, Asn-424, Asn-564, and Asn-630. Residues 422 to 443 (QQNTTTTTTTTRSRRQRRSVSS) are disordered. Residues 679 to 730 (LTDLATNRNQFVDAFGSLMDDLGVVGKTVLNAVSSVATLFSSIVSGIINFIK) are hydrophobic membrane proximal region. A helical membrane pass occupies residues 733–753 (FGGMLLFGLIAAVVITVILLN). Residues 754–854 (RKAKRFAQNP…TDSFESTGVP (101 aa)) lie on the Intravirion side of the membrane. The span at 802–813 (HASKQPESKQDE) shows a compositional bias: basic and acidic residues. Residues 802–829 (HASKQPESKQDEEQGSTTSGPADWLNKA) are disordered. The Internalization motif motif lies at 839–842 (YKPL).

This sequence belongs to the herpesviridae glycoprotein B family. As to quaternary structure, homotrimer; disulfide-linked. Binds to heparan sulfate proteoglycans. Interacts with gH/gL heterodimer. A proteolytic cleavage by host furin generates two subunits that remain linked by disulfide bonds.

Its subcellular location is the virion membrane. The protein resides in the host cell membrane. It localises to the host endosome membrane. The protein localises to the host Golgi apparatus membrane. In terms of biological role, envelope glycoprotein that forms spikes at the surface of virion envelope. Essential for the initial attachment to heparan sulfate moieties of the host cell surface proteoglycans. Involved in fusion of viral and cellular membranes leading to virus entry into the host cell. Following initial binding to its host receptors, membrane fusion is mediated by the fusion machinery composed at least of gB and the heterodimer gH/gL. May be involved in the fusion between the virion envelope and the outer nuclear membrane during virion egress. The sequence is that of Envelope glycoprotein B from Connochaetes taurinus (Blue wildebeest).